The primary structure comprises 357 residues: ATP-dependent 6-phosphofructokinase 2 (357 aa).

ATP-binding positions include Gly-12, 80 to 81 (KG), and 107 to 110 (GDGS). Asp-108 is a Mg(2+) binding site. Residues 131–133 (TID), Arg-168, 175–177 (MGR), Glu-229, Arg-272, and 278–281 (HIQR) each bind substrate. Residue Asp-133 is the Proton acceptor of the active site.

It belongs to the phosphofructokinase type A (PFKA) family. Mixed-substrate PFK group III subfamily. In terms of assembly, homodimer or homotetramer. The cofactor is Mg(2+).

It localises to the cytoplasm. The catalysed reaction is beta-D-fructose 6-phosphate + ATP = beta-D-fructose 1,6-bisphosphate + ADP + H(+). Its pathway is carbohydrate degradation; glycolysis; D-glyceraldehyde 3-phosphate and glycerone phosphate from D-glucose: step 3/4. Its activity is regulated as follows. Subject to allosteric activation by ADP and other diphosphonucleosides, and inhibition by phosphoenolpyruvate. In terms of biological role, catalyzes the phosphorylation of D-fructose 6-phosphate to fructose 1,6-bisphosphate by ATP, the first committing step of glycolysis. The chain is ATP-dependent 6-phosphofructokinase 2 from Nostoc sp. (strain PCC 7120 / SAG 25.82 / UTEX 2576).